The primary structure comprises 263 residues: Endolytic peptidoglycan transglycosylase RlpA (263 aa).

The signal sequence occupies residues 1–16 (MNRIYLYLLIVLILAG). C17 is lipidated: N-palmitoyl cysteine. Residue C17 is the site of S-diacylglycerol cysteine attachment. The 76-residue stretch at 182–257 (KNNALEYVIQ…AGYDSAFIKT (76 aa)) folds into the SPOR domain.

It belongs to the RlpA family.

Its subcellular location is the cell membrane. Functionally, lytic transglycosylase with a strong preference for naked glycan strands that lack stem peptides. This is Endolytic peptidoglycan transglycosylase RlpA from Vibrio cholerae serotype O1 (strain ATCC 39315 / El Tor Inaba N16961).